The primary structure comprises 409 residues: NADH-quinone oxidoreductase subunit D (409 aa).

Belongs to the complex I 49 kDa subunit family. As to quaternary structure, NDH-1 is composed of 14 different subunits. Subunits NuoB, C, D, E, F, and G constitute the peripheral sector of the complex.

It is found in the cell inner membrane. The catalysed reaction is a quinone + NADH + 5 H(+)(in) = a quinol + NAD(+) + 4 H(+)(out). Its function is as follows. NDH-1 shuttles electrons from NADH, via FMN and iron-sulfur (Fe-S) centers, to quinones in the respiratory chain. The immediate electron acceptor for the enzyme in this species is believed to be ubiquinone. Couples the redox reaction to proton translocation (for every two electrons transferred, four hydrogen ions are translocated across the cytoplasmic membrane), and thus conserves the redox energy in a proton gradient. This Helicobacter hepaticus (strain ATCC 51449 / 3B1) protein is NADH-quinone oxidoreductase subunit D.